Reading from the N-terminus, the 61-residue chain is Small ribosomal subunit protein uS14 (61 aa).

Zn(2+) is bound by residues Cys24, Cys27, Cys40, and Cys43.

The protein belongs to the universal ribosomal protein uS14 family. Zinc-binding uS14 subfamily. Part of the 30S ribosomal subunit. Contacts proteins S3 and S10. Zn(2+) serves as cofactor.

Functionally, binds 16S rRNA, required for the assembly of 30S particles and may also be responsible for determining the conformation of the 16S rRNA at the A site. This Herpetosiphon aurantiacus (strain ATCC 23779 / DSM 785 / 114-95) protein is Small ribosomal subunit protein uS14.